Consider the following 354-residue polypeptide: Protein Wnt-8a (354 aa).

The signal sequence occupies residues 1 to 19; that stretch reads MGHLLMLWVAAGMCYPALG. Cysteines 54 and 65 form a disulfide. N103 carries an N-linked (GlcNAc...) asparagine glycan. Disulfide bonds link C104–C112, C114–C132, C180–C194, C182–C189, C259–C297, C275–C290, C294–C336, C312–C327, C314–C324, and C319–C320. Residue S186 is the site of O-palmitoleoyl serine attachment. An N-linked (GlcNAc...) asparagine glycan is attached at N262.

The protein belongs to the Wnt family. In terms of assembly, forms a soluble 1:1 complex with AFM; this prevents oligomerization and is required for prolonged biological activity. The complex with AFM may represent the physiological form in body fluids. Post-translationally, palmitoleoylation is required for efficient binding to frizzled receptors. Depalmitoleoylation leads to Wnt signaling pathway inhibition. In terms of processing, proteolytic processing by TIKI1 and TIKI2 promotes oxidation and formation of large disulfide-bond oligomers, leading to inactivation of WNT8A.

It localises to the secreted. The protein localises to the extracellular space. It is found in the extracellular matrix. In terms of biological role, ligand for members of the frizzled family of seven transmembrane receptors. Plays a role in embryonic patterning. This chain is Protein Wnt-8a (Wnt8a), found in Mus musculus (Mouse).